We begin with the raw amino-acid sequence, 291 residues long: uncharacterized protein (291 aa).

The next 10 helical transmembrane spans lie at 5 to 23 (ILLS…YFST), 33 to 52 (IFGF…VFLF), 69 to 91 (PLLI…LFLW), 101 to 120 (VSFG…RLVF), 127 to 144 (VKFL…SNIL), 148 to 165 (GLSW…TYFA), 172 to 194 (INDL…YFAW), 209 to 228 (LLLL…TYIV), 235 to 257 (INVL…FLIG), and 262 to 284 (SETI…EGLV).

The protein belongs to the EamA transporter family.

It localises to the cell membrane. This is an uncharacterized protein from Pasteurella multocida (strain Pm70).